Consider the following 598-residue polypeptide: UvrABC system protein C (598 aa).

The 78-residue stretch at 14-91 folds into the GIY-YIG domain; it reads DSPGCYLHKD…IQKNMPKYNI (78 aa). Positions 196–231 constitute a UVR domain; sequence DKIIEDLRSKMLAASEEMAFERAAEYRDLISGIATM.

This sequence belongs to the UvrC family. Interacts with UvrB in an incision complex.

It localises to the cytoplasm. Functionally, the UvrABC repair system catalyzes the recognition and processing of DNA lesions. UvrC both incises the 5' and 3' sides of the lesion. The N-terminal half is responsible for the 3' incision and the C-terminal half is responsible for the 5' incision. The chain is UvrABC system protein C from Streptococcus pyogenes serotype M18 (strain MGAS8232).